Consider the following 409-residue polypeptide: L-cysteine:1D-myo-inositol 2-amino-2-deoxy-alpha-D-glucopyranoside ligase (409 aa).

Position 43 (Cys43) interacts with Zn(2+). Residues 43-46 (CGIT), Thr58, and 81-83 (NVT) each bind L-cysteinyl-5'-AMP. The 'HIGH' region signature appears at 45–55 (ITPYDATHMGH). Positions 183-188 (ERGGDP) match the 'ERGGDP' region motif. Trp224 contacts L-cysteinyl-5'-AMP. Cys228 contacts Zn(2+). 246 to 248 (GSD) provides a ligand contact to L-cysteinyl-5'-AMP. His253 contributes to the Zn(2+) binding site. An L-cysteinyl-5'-AMP-binding site is contributed by Val280. Positions 286–290 (KMSKS) match the 'KMSKS' region motif.

This sequence belongs to the class-I aminoacyl-tRNA synthetase family. MshC subfamily. As to quaternary structure, monomer. Zn(2+) serves as cofactor.

The enzyme catalyses 1D-myo-inositol 2-amino-2-deoxy-alpha-D-glucopyranoside + L-cysteine + ATP = 1D-myo-inositol 2-(L-cysteinylamino)-2-deoxy-alpha-D-glucopyranoside + AMP + diphosphate + H(+). Its function is as follows. Catalyzes the ATP-dependent condensation of GlcN-Ins and L-cysteine to form L-Cys-GlcN-Ins. This chain is L-cysteine:1D-myo-inositol 2-amino-2-deoxy-alpha-D-glucopyranoside ligase, found in Streptomyces griseus subsp. griseus (strain JCM 4626 / CBS 651.72 / NBRC 13350 / KCC S-0626 / ISP 5235).